A 384-amino-acid chain; its full sequence is Beta-glucuronosyltransferase GlcAT14C (384 aa).

The Cytoplasmic segment spans residues 1-11 (MKRSHISSPRS). Residues 12 to 34 (YSRPAISIFGVFLLFLLVLTLSS) traverse the membrane as a signal-anchor for type II membrane protein segment. The Lumenal segment spans residues 35 to 384 (RKPSDSSSGL…HENFRAKQCK (350 aa)). Residues Asn156, Asn285, and Asn306 are each glycosylated (N-linked (GlcNAc...) asparagine).

It belongs to the glycosyltransferase 14 family.

It localises to the golgi apparatus membrane. Functionally, beta-glucuronosyltransferase involved in the biosynthesis of type II arabinogalactan (AG). Modifies both the beta-1,6-linked galactan and beta-1,3-linked galactan present in type II AG. The sequence is that of Beta-glucuronosyltransferase GlcAT14C from Arabidopsis thaliana (Mouse-ear cress).